The sequence spans 524 residues: Na(+)/H(+) antiporter NhaB (524 aa).

Transmembrane regions (helical) follow at residues 13-33 (FLGN…IINP), 98-118 (LLLV…LFVF), 140-160 (AFLS…SVSV), 239-259 (FFIR…LVCL), 304-324 (AIIG…VGLV), 325-345 (GLSV…HSLG), 358-378 (LTVF…TPII), 448-468 (ATPN…APLI), and 479-499 (ALPY…FLLV).

This sequence belongs to the NhaB Na(+)/H(+) (TC 2.A.34) antiporter family.

The protein resides in the cell inner membrane. It catalyses the reaction 2 Na(+)(in) + 3 H(+)(out) = 2 Na(+)(out) + 3 H(+)(in). Its function is as follows. Na(+)/H(+) antiporter that extrudes sodium in exchange for external protons. In Yersinia pseudotuberculosis serotype O:3 (strain YPIII), this protein is Na(+)/H(+) antiporter NhaB.